The primary structure comprises 519 residues: MEKVVTLNHDLPLLHFPNSRKPFSIPSPILRISSFKRHKKRSCLASSSRLGFYTETKTVSESHGVIVDNSTIGRRLLGLAAAVSVAVSLSIFCDSPALAESLTIAFPVSRAREVTTVQRTLVEAWGLIRETFVDPTFNHQDWDFKLQQTMVEMFPLRSADAAYGKLKAMLSTLGDPFTRLITPKEYQSFRIGSDGNLQGVGLFINSEPRTGHLVVMSCVEGSPADRAGIHEGEELVEINGEKLDDVDSEAAAQKLRGRVGTFVTIKLKNVNGSGTDSGIREVKLPRDYIKLSPISSAIIPHTTPDGRLAKTGYVKLTAFSQTAASDMENAVHEMENQDVQSYILDLRNNPGGLVRAGLDVAQLWLDGDETLVYTIDREGVTSPINMINGHAVTHDPLVVLVNEGSASASEILAGALHDNGRAILVGNRTFGKGKIQSITELNDGSALFVTVAKYLSPSLHEIDQVGIAPDVQCTTGMIDSLTAEIVEKMNSSVPLLEADSCVMVAEHELEARRSNGTAS.

Residues 186 to 274 form the PDZ domain; that stretch reads YQSFRIGSDG…IKLKNVNGSG (89 aa). Catalysis depends on charge relay system residues Ser407 and Lys432.

It belongs to the peptidase S41A family.

Its subcellular location is the plastid. The protein localises to the chloroplast thylakoid lumen. The catalysed reaction is The enzyme shows specific recognition of a C-terminal tripeptide, Xaa-Yaa-Zaa, in which Xaa is preferably Ala or Leu, Yaa is preferably Ala or Tyr, and Zaa is preferably Ala, but then cleaves at a variable distance from the C-terminus. A typical cleavage is -Ala-Ala-|-Arg-Ala-Ala-Lys-Glu-Asn-Tyr-Ala-Leu-Ala-Ala.. Protease involved in the C-terminal processing of the chloroplastic D1 protein of photosystem II. This proteolytic processing is necessary to allow the light-driven assembly of the tetranuclear manganese cluster, which is responsible for photosynthetic water oxidation. This chain is Carboxyl-terminal-processing peptidase 3, chloroplastic (CTPA3), found in Arabidopsis thaliana (Mouse-ear cress).